A 475-amino-acid chain; its full sequence is Membrane-bound lytic murein transglycosylase F (475 aa).

The signal sequence occupies residues 1-30 (MKKLKINYLFIGILTLLLAAALWPSIPWFG). The segment at 31–269 (KTENHIAAIQ…RIEEKYLGHG (239 aa)) is non-LT domain. The segment at 270–475 (DDFDYVDTRS…MKLAQDYPAV (206 aa)) is LT domain. E314 is an active-site residue.

It in the N-terminal section; belongs to the bacterial solute-binding protein 3 family. This sequence in the C-terminal section; belongs to the transglycosylase Slt family.

It is found in the cell outer membrane. The catalysed reaction is Exolytic cleavage of the (1-&gt;4)-beta-glycosidic linkage between N-acetylmuramic acid (MurNAc) and N-acetylglucosamine (GlcNAc) residues in peptidoglycan, from either the reducing or the non-reducing ends of the peptidoglycan chains, with concomitant formation of a 1,6-anhydrobond in the MurNAc residue.. In terms of biological role, murein-degrading enzyme that degrades murein glycan strands and insoluble, high-molecular weight murein sacculi, with the concomitant formation of a 1,6-anhydromuramoyl product. Lytic transglycosylases (LTs) play an integral role in the metabolism of the peptidoglycan (PG) sacculus. Their lytic action creates space within the PG sacculus to allow for its expansion as well as for the insertion of various structures such as secretion systems and flagella. The chain is Membrane-bound lytic murein transglycosylase F from Salmonella typhi.